Reading from the N-terminus, the 212-residue chain is MHILVTGFAPFDNQDINPSWEAVTQLEDIIGTHTIDKLKLPTSFKKVDTMINKALASNHYDIVLSIGQAGGRSAITPERVAINIDDARIPDNDDFQPIDQAIHLDGAPAYFSNLPVKAMTQSIINQGLPGALSNSAGTFVCNHVLYHLGYLQDKHYPLLRFGFIHVPYIPEQIDGKSDTPSMTLENIVTGLTAAIEAISDDDDLRIALGTTE.

Active-site residues include Glu78, Cys141, and His165.

The protein belongs to the peptidase C15 family. Homotetramer.

The protein localises to the cytoplasm. The catalysed reaction is Release of an N-terminal pyroglutamyl group from a polypeptide, the second amino acid generally not being Pro.. Removes 5-oxoproline from various penultimate amino acid residues except L-proline. This Staphylococcus aureus (strain bovine RF122 / ET3-1) protein is Pyrrolidone-carboxylate peptidase.